Reading from the N-terminus, the 245-residue chain is Uridylate kinase (245 aa).

Residue 18–21 (KLSG) participates in ATP binding. Glycine 60 is a UMP binding site. ATP contacts are provided by glycine 61 and arginine 65. Residues aspartate 80 and 141–148 (TGNPFFTT) contribute to the UMP site. Threonine 168, tyrosine 174, and aspartate 177 together coordinate ATP.

It belongs to the UMP kinase family. In terms of assembly, homohexamer.

It localises to the cytoplasm. It catalyses the reaction UMP + ATP = UDP + ADP. The protein operates within pyrimidine metabolism; CTP biosynthesis via de novo pathway; UDP from UMP (UMPK route): step 1/1. With respect to regulation, inhibited by UTP. Its function is as follows. Catalyzes the reversible phosphorylation of UMP to UDP. The protein is Uridylate kinase of Pseudomonas aeruginosa (strain UCBPP-PA14).